Reading from the N-terminus, the 156-residue chain is SCP2 sterol-binding domain-containing protein 1 (156 aa).

Residues 44–156 (SFPVFQDIRL…ERVFKDWAKF (113 aa)) enclose the SCP2 domain.

The polypeptide is SCP2 sterol-binding domain-containing protein 1 (SCP2D1) (Homo sapiens (Human)).